We begin with the raw amino-acid sequence, 497 residues long: Tyrosine-protein kinase SPK-1 (497 aa).

Residues 1–25 (MGQKFSIKCKKQSKNKNTSKCQKIP) form a disordered region. Residues 33–94 (PGSYMVKAKY…PSNYVSKQDG (62 aa)) enclose the SH3 domain. An SH2 domain is found at 100 to 200 (EAWREIQRWE…NTHIPLTDPM (101 aa)). Positions 220–482 (IEILNEIGRG…LVLQEKMDLL (263 aa)) constitute a Protein kinase domain. Residues 226–234 (IGRGFFGSV) and K248 each bind ATP. The active-site Proton acceptor is the D342.

The protein belongs to the protein kinase superfamily. Tyr protein kinase family.

It carries out the reaction L-tyrosyl-[protein] + ATP = O-phospho-L-tyrosyl-[protein] + ADP + H(+). This chain is Tyrosine-protein kinase SPK-1, found in Girardia tigrina (Planarian).